The chain runs to 192 residues: Transmembrane protein 276 (192 aa).

The N-terminal stretch at 1–32 (MVSKPRTEWSTVLSHLVLAGVSLHAAVSSVQS) is a signal peptide. The next 4 helical transmembrane spans lie at 35–55 (GAAAGFLLQTFAAIIMLAPGP), 63–83 (AGAWVATVIGLPLLAFDFHWV), 92–112 (LLLGGGMVLAVAGDHLGPEGC), and 114–134 (VAGQAVLLVVAVTILIVAVFT).

It localises to the membrane. This chain is Transmembrane protein 276, found in Mus musculus (Mouse).